The chain runs to 146 residues: Universal stress protein A homolog 2 (146 aa).

The protein belongs to the universal stress protein A family. In terms of assembly, homodimer.

The protein localises to the cytoplasm. In terms of biological role, involved in stress response. This is Universal stress protein A homolog 2 (uspA2) from Coxiella burnetii (strain RSA 493 / Nine Mile phase I).